The following is a 379-amino-acid chain: Succinyl-diaminopimelate desuccinylase (379 aa).

Residue H68 coordinates Zn(2+). Residue D70 is part of the active site. Residue D101 participates in Zn(2+) binding. The active-site Proton acceptor is the E135. Zn(2+)-binding residues include E136, E164, and H350.

The protein belongs to the peptidase M20A family. DapE subfamily. Homodimer. Zn(2+) serves as cofactor. Requires Co(2+) as cofactor.

The catalysed reaction is N-succinyl-(2S,6S)-2,6-diaminopimelate + H2O = (2S,6S)-2,6-diaminopimelate + succinate. The protein operates within amino-acid biosynthesis; L-lysine biosynthesis via DAP pathway; LL-2,6-diaminopimelate from (S)-tetrahydrodipicolinate (succinylase route): step 3/3. Catalyzes the hydrolysis of N-succinyl-L,L-diaminopimelic acid (SDAP), forming succinate and LL-2,6-diaminopimelate (DAP), an intermediate involved in the bacterial biosynthesis of lysine and meso-diaminopimelic acid, an essential component of bacterial cell walls. This chain is Succinyl-diaminopimelate desuccinylase, found in Bordetella parapertussis (strain 12822 / ATCC BAA-587 / NCTC 13253).